A 146-amino-acid polypeptide reads, in one-letter code: Large ribosomal subunit protein uL15 (146 aa).

Over residues 1-13 (MKLHELKPAEGSR) the composition is skewed to basic and acidic residues. Residues 1–57 (MKLHELKPAEGSRKVRNRVGRGTSSGNGKTSGRGQKGQKARSGVGLRPGFEGGQTPL) are disordered. Positions 23 to 35 (TSSGNGKTSGRGQ) are enriched in gly residues.

Belongs to the universal ribosomal protein uL15 family. As to quaternary structure, part of the 50S ribosomal subunit.

Its function is as follows. Binds to the 23S rRNA. This chain is Large ribosomal subunit protein uL15, found in Streptococcus thermophilus (strain CNRZ 1066).